Reading from the N-terminus, the 490-residue chain is Probable glycine dehydrogenase (decarboxylating) subunit 2 (490 aa).

Residue lysine 273 is modified to N6-(pyridoxal phosphate)lysine.

The protein belongs to the GcvP family. C-terminal subunit subfamily. As to quaternary structure, the glycine cleavage system is composed of four proteins: P, T, L and H. In this organism, the P 'protein' is a heterodimer of two subunits. Requires pyridoxal 5'-phosphate as cofactor.

The enzyme catalyses N(6)-[(R)-lipoyl]-L-lysyl-[glycine-cleavage complex H protein] + glycine + H(+) = N(6)-[(R)-S(8)-aminomethyldihydrolipoyl]-L-lysyl-[glycine-cleavage complex H protein] + CO2. Functionally, the glycine cleavage system catalyzes the degradation of glycine. The P protein binds the alpha-amino group of glycine through its pyridoxal phosphate cofactor; CO(2) is released and the remaining methylamine moiety is then transferred to the lipoamide cofactor of the H protein. This chain is Probable glycine dehydrogenase (decarboxylating) subunit 2, found in Staphylococcus aureus (strain MRSA252).